The sequence spans 133 residues: Ribonuclease P protein component (133 aa).

This sequence belongs to the RnpA family. In terms of assembly, consists of a catalytic RNA component (M1 or rnpB) and a protein subunit.

The enzyme catalyses Endonucleolytic cleavage of RNA, removing 5'-extranucleotides from tRNA precursor.. Functionally, RNaseP catalyzes the removal of the 5'-leader sequence from pre-tRNA to produce the mature 5'-terminus. It can also cleave other RNA substrates such as 4.5S RNA. The protein component plays an auxiliary but essential role in vivo by binding to the 5'-leader sequence and broadening the substrate specificity of the ribozyme. This chain is Ribonuclease P protein component, found in Corynebacterium glutamicum (strain R).